The sequence spans 384 residues: Guanine nucleotide-binding protein alpha-1 subunit (384 aa).

A lipid anchor (N-myristoyl glycine) is attached at glycine 2. Cysteine 5 carries the S-palmitoyl cysteine lipid modification. The region spanning 38 to 384 is the G-alpha domain; sequence HIQKLLLLGA…RRNLFEAGLL (347 aa). Residues 41-54 form a G1 motif region; it reads KLLLLGAGESGKST. GTP contacts are provided by glutamate 49, serine 50, glycine 51, lysine 52, serine 53, threonine 54, leucine 188, tyrosine 189, threonine 194, glycine 222, asparagine 288, lysine 289, aspartate 291, and alanine 356. Position 53 (serine 53) interacts with Mg(2+). The segment at 186–194 is G2 motif; sequence DVLYARVRT. Threonine 194 is a binding site for Mg(2+). The segment at 215-224 is G3 motif; sequence YRLFDVGGQR. The tract at residues 284–291 is G4 motif; sequence MLFLNKFD. A G5 motif region spans residues 354-359; that stretch reads TTALDQ.

The protein belongs to the G-alpha family. As to quaternary structure, g proteins are composed of 3 units; alpha, beta and gamma. The alpha chain contains the guanine nucleotide binding site. Mg(2+) is required as a cofactor.

In terms of biological role, guanine nucleotide-binding proteins (G proteins) are involved as modulators or transducers in various transmembrane signaling systems. The sequence is that of Guanine nucleotide-binding protein alpha-1 subunit (GPA1) from Lupinus luteus (European yellow lupine).